Reading from the N-terminus, the 356-residue chain is Cyanuric acid amidohydrolase (356 aa).

Residues Met1 to Asn99 form an RU A region. Residues Arg52 and Ser79 to Gly80 each bind substrate. Positions Ala106 to Glu243 are RU B. Residue Lys156 is part of the active site. Substrate contacts are provided by residues Arg188 and Ser226 to Ser227. The Nucleophile role is filled by Ser226. Residues Leu249–Gly356 are RU C. Residue Glu287 participates in Mg(2+) binding. Substrate contacts are provided by residues Arg314 and Ser333–Gly334. Residues Gly336, Gln339, Gly340, Pro341, and Gly344 each coordinate Mg(2+).

Belongs to the cyclic amide hydrolase (CyAH) family. As to quaternary structure, homotetramer.

The catalysed reaction is cyanurate + H2O = 1-carboxybiuret + H(+). The protein operates within xenobiotic degradation; atrazine degradation; biuret from cyanurate: step 1/1. Inhibited by barbituric acid. Its function is as follows. Responsible for the hydrolysis of cyanuric acid, an intermediate formed during catabolism of s-triazine based compounds in herbicides such as atrazine and polymers such as melamine. Catalyzes the hydrolytic opening of the s-triazine ring of cyanuric acid (2,4,6-trihydroxy-s-triazine) to yield carbon dioxide and carboxybiuret, which spontaneously decarboxylates to biuret. The polypeptide is Cyanuric acid amidohydrolase (Azorhizobium caulinodans (strain ATCC 43989 / DSM 5975 / JCM 20966 / LMG 6465 / NBRC 14845 / NCIMB 13405 / ORS 571)).